A 480-amino-acid polypeptide reads, in one-letter code: MAENIGTVIQVSGPAVDVQFPEATMPGIYQALRVVSDGFDVPTPINVILEVQQHLGEGRVRCVAMEATDGMVRGMKAIDLGGPISVPVGRETLGRVLNVIGEPVDNMGPVQAKVHMPIHRQAPAFDEQATGEEMFETGVKVIDLIQPFLKGGKIGLFGGAGVGKTVVIQELINNVASKHGGFSVFAGVGERTREGNDLWLEFQEAGVIDIHDFSKSKAALIYGQMTEPPGARLRVALTGLTVAEYFRDQEGADTLLFIDNIFRFTQAGSEVSTLLGRMPSAVGYQPNLATEMGELQERITSTKKGSVTSVQAVYVPADDMTDPAPATTFAHLDATTVLSRPLSELGIYPAVDPLASTSRILTPAVVGQEHYDVAQGVKRILQRYKDLQDIIAILGIDELSEEDRLTVSRARKVQKFLSQPFHVAEQFTGIPGRYCKIADTVRSFKEVIEGKHDSVPEQAFYMKGTIEEVLEEAEKMQAAK.

Position 158-165 (158-165 (GGAGVGKT)) interacts with ATP.

The protein belongs to the ATPase alpha/beta chains family. In terms of assembly, F-type ATPases have 2 components, CF(1) - the catalytic core - and CF(0) - the membrane proton channel. CF(1) has five subunits: alpha(3), beta(3), gamma(1), delta(1), epsilon(1). CF(0) has three main subunits: a(1), b(2) and c(9-12). The alpha and beta chains form an alternating ring which encloses part of the gamma chain. CF(1) is attached to CF(0) by a central stalk formed by the gamma and epsilon chains, while a peripheral stalk is formed by the delta and b chains.

It is found in the cell inner membrane. It catalyses the reaction ATP + H2O + 4 H(+)(in) = ADP + phosphate + 5 H(+)(out). In terms of biological role, produces ATP from ADP in the presence of a proton gradient across the membrane. The catalytic sites are hosted primarily by the beta subunits. The chain is ATP synthase subunit beta from Acidobacterium capsulatum (strain ATCC 51196 / DSM 11244 / BCRC 80197 / JCM 7670 / NBRC 15755 / NCIMB 13165 / 161).